The following is a 224-amino-acid chain: Phosphoglycolate phosphatase (224 aa).

Residue D8 is the Nucleophile of the active site. 2 residues coordinate Mg(2+): D8 and D10. Position 151 (K151) interacts with substrate. Mg(2+)-binding residues include D174 and D178.

The protein belongs to the archaeal SPP-like hydrolase family. Requires Mg(2+) as cofactor.

The catalysed reaction is 2-phosphoglycolate + H2O = glycolate + phosphate. Catalyzes the dephosphorylation of 2-phosphoglycolate. In Thermoplasma volcanium (strain ATCC 51530 / DSM 4299 / JCM 9571 / NBRC 15438 / GSS1), this protein is Phosphoglycolate phosphatase.